The following is a 309-amino-acid chain: Elongation factor Ts (309 aa).

Residues 82-85 form an involved in Mg(2+) ion dislocation from EF-Tu region; the sequence is TDFV.

Belongs to the EF-Ts family.

It is found in the cytoplasm. In terms of biological role, associates with the EF-Tu.GDP complex and induces the exchange of GDP to GTP. It remains bound to the aminoacyl-tRNA.EF-Tu.GTP complex up to the GTP hydrolysis stage on the ribosome. The chain is Elongation factor Ts from Rickettsia rickettsii (strain Iowa).